Here is a 1256-residue protein sequence, read N- to C-terminus: Neuronal cell adhesion molecule (1256 aa).

Residues 1–29 (MQLKIMPKKKHLSAGGVPLILFLCQMISA) form the signal peptide. Residues 30–1119 (LDVPLDLVQP…ASRQVDIATQ (1090 aa)) lie on the Extracellular side of the membrane. Ig-like C2-type domains follow at residues 40 to 128 (PTIT…AAVS) and 135 to 229 (PSRS…QPIS). 2 disulfides stabilise this stretch: Cys-62–Cys-117 and Cys-161–Cys-212. Asn-77 carries N-linked (GlcNAc...) asparagine glycosylation. Residues Asn-217, Asn-239, Asn-245, Asn-270, Asn-308, and Asn-371 are each glycosylated (N-linked (GlcNAc...) asparagine). 4 consecutive Ig-like C2-type domains span residues 261 to 350 (PPTF…ISVT), 355 to 442 (PYWI…AFVN), 448 to 535 (PRIL…VHLE), and 539 to 626 (PTRI…AVLR). An intrachain disulfide couples Cys-286 to Cys-334. An intrachain disulfide couples Cys-376 to Cys-426. Residues Asn-427 and Asn-501 are each glycosylated (N-linked (GlcNAc...) asparagine). 2 disulfides stabilise this stretch: Cys-470/Cys-519 and Cys-561/Cys-610. Residues Asn-613, Asn-710, Asn-796, Asn-852, Asn-987, Asn-1003, Asn-1013, and Asn-1067 are each glycosylated (N-linked (GlcNAc...) asparagine). 4 Fibronectin type-III domains span residues 643 to 738 (PPFD…TKAA), 740 to 837 (PDQN…SGED), 842 to 944 (APGN…TPEG), and 948 to 1045 (APSS…VDEA). The chain crosses the membrane as a helical span at residues 1120–1142 (GWFIGLMCAVALLILILLIVCFI). Topologically, residues 1143-1256 (RRNKGGKYPV…SPVNAMNSFV (114 aa)) are cytoplasmic. A compositionally biased stretch (basic and acidic residues) spans 1151–1171 (PVKEKEDAHADPEIQPMKEDD). The segment at 1151–1256 (PVKEKEDAHA…SPVNAMNSFV (106 aa)) is disordered. Thr-1173 bears the Phosphothreonine mark. Tyr-1177 is subject to Phosphotyrosine. Residue Ser-1178 is modified to Phosphoserine. Residues 1193–1202 (PSDRTVKKED) are compositionally biased toward basic and acidic residues. Phosphoserine occurs at positions 1203, 1206, 1223, 1242, 1243, and 1247. The span at 1240–1256 (NESSEAPSPVNAMNSFV) shows a compositional bias: polar residues.

The protein belongs to the immunoglobulin superfamily. L1/neurofascin/NgCAM family. Constituent of a NFASC/NRCAM/ankyrin-G complex. Detected in a complex with CNTN1 and PTPRB. Interacts with GLDN/gliomedin and MYOC. As to expression, detected in sciatic nerve. Detected in brain, especially in the cerebellum Purkinje cell layer, inner granule cell layer and molecular layer (at protein level). Detected in neurons and Schwann cells.

It is found in the cell membrane. It localises to the cell projection. The protein localises to the axon. Its subcellular location is the secreted. Cell adhesion protein that is required for normal responses to cell-cell contacts in brain and in the peripheral nervous system. Plays a role in neurite outgrowth in response to contactin binding. Plays a role in mediating cell-cell contacts between Schwann cells and axons. Plays a role in the formation and maintenance of the nodes of Ranvier on myelinated axons. Nodes of Ranvier contain clustered sodium channels that are crucial for the saltatory propagation of action potentials along myelinated axons. During development, nodes of Ranvier are formed by the fusion of two heminodes. Required for normal clustering of sodium channels at heminodes; not required for the formation of mature nodes with normal sodium channel clusters. Required, together with GLDN, for maintaining NFASC and sodium channel clusters at mature nodes of Ranvier. In Mus musculus (Mouse), this protein is Neuronal cell adhesion molecule (Nrcam).